The chain runs to 200 residues: Lipopolysaccharide core heptose(II)-phosphate phosphatase (200 aa).

Positions Met-1 to Ala-25 are cleaved as a signal peptide.

Belongs to the phosphoglycerate mutase family. Ais subfamily.

It localises to the periplasm. It functions in the pathway bacterial outer membrane biogenesis; lipopolysaccharide metabolism. Catalyzes the dephosphorylation of heptose(II) of the outer membrane lipopolysaccharide core. The chain is Lipopolysaccharide core heptose(II)-phosphate phosphatase from Escherichia coli (strain SE11).